The chain runs to 94 residues: Scorpine (94 aa).

Positions 1–19 (MNSKLTALIFLGLIAIAYC) are cleaved as a signal peptide. The BetaSPN-type CS-alpha/beta domain occupies 55-94 (EFQCMANMDMLGNCEKHCQTSGEKGYCHGTKCKCGTPLSY). 3 disulfide bridges follow: Cys58/Cys81, Cys68/Cys86, and Cys72/Cys88.

It belongs to the long chain scorpion toxin family. Class 3 subfamily. In terms of tissue distribution, expressed by the venom gland.

The protein resides in the secreted. Its subcellular location is the target cell membrane. Functionally, this full-length protein shows antibacterial activity against B.subtilis and K.pneumoniae. Also shows a potent inhibitory effect on the ookinete (ED(50) 0.7 uM) and gamete (ED(50) 10 uM) stages of Plasmodium berghei development. In addition, induces cell membrane disruption, leakage currents and cell death on HEK293 cell line (tested at 25 uM). The sequence is that of Scorpine from Pandinus imperator (Emperor scorpion).